The following is a 296-amino-acid chain: Endochitinase 3 (296 aa).

Residues 12–296 (HKLTVYWGAE…VKNGQLPEED (285 aa)) enclose the GH18 domain. Asparagine 32 and asparagine 152 each carry an N-linked (GlcNAc...) asparagine glycan. Residue glutamate 153 is the Proton donor of the active site. Asparagine 228 carries an N-linked (GlcNAc...) asparagine glycan.

Belongs to the glycosyl hydrolase 18 family. Chitinase class III subfamily.

The protein localises to the secreted. The enzyme catalyses Random endo-hydrolysis of N-acetyl-beta-D-glucosaminide (1-&gt;4)-beta-linkages in chitin and chitodextrins.. Functionally, secreted chitinase involved in the degradation of chitin, a component of the cell walls of fungi and exoskeletal elements of some animals (including worms and arthropods). Participates in the infection process and directly acts in the penetration process of the host cuticle. Involved in heat-shock adaptation. This chain is Endochitinase 3 (chi3), found in Metarhizium anisopliae (Entomophthora anisopliae).